The sequence spans 511 residues: Signal transduction histidine-protein kinase/phosphatase MprB (511 aa).

Over 1–26 the chain is Cytoplasmic; the sequence is MVGFRRGPRAPLRATSSLSLRWRVML. A helical transmembrane segment spans residues 27–47; sequence LAMSMVAMVVVLMSFAVYAVI. Residues 48–163 lie on the Extracellular side of the membrane; the sequence is SAALYSDIDN…PTEAVMTKLR (116 aa). A helical membrane pass occupies residues 164 to 184; sequence AVLLIVGGVGVAVAAVAGGMV. At 185 to 511 the chain is on the cytoplasmic side; that stretch reads TRAGLRPVGR…SVDSQSARAR (327 aa). The region spanning 186–238 is the HAMP domain; sequence RAGLRPVGRLTEAAERVARTDDLRPIPVFGSDELARLTEAFNLMLRALAESRE. The Histidine kinase domain occupies 246 to 466; that stretch reads DAGHELRTPL…AICMLLPGRP (221 aa). Histidine 249 is modified (phosphohistidine; by autocatalysis). Residues 468 to 511 are disordered; it reads PDSAYPAAPDDKKTEPVDTRGANGANSRGSANVISVDSQSARAR. The span at 476–485 shows a compositional bias: basic and acidic residues; that stretch reads PDDKKTEPVD. A compositionally biased stretch (polar residues) spans 491 to 511; the sequence is GANSRGSANVISVDSQSARAR.

It depends on Mg(2+) as a cofactor. The cofactor is Mn(2+). Autophosphorylated.

It is found in the cell membrane. It catalyses the reaction ATP + protein L-histidine = ADP + protein N-phospho-L-histidine.. Its function is as follows. Member of the two-component regulatory system MprB/MprA which contributes to maintaining a balance among several systems involved in stress resistance and is required for establishment and maintenance of persistent infection in the host. In response to environmental signals MprB acts both as a membrane-associated protein kinase that undergoes autophosphorylation and subsequently transfers the phosphate to MprA, and a protein phosphatase that dephosphorylates phospho-MprA. The sequence is that of Signal transduction histidine-protein kinase/phosphatase MprB (mprB) from Mycobacterium ulcerans (strain Agy99).